The following is a 424-amino-acid chain: Enolase (424 aa).

Gln163 lines the (2R)-2-phosphoglycerate pocket. The active-site Proton donor is the Glu205. Positions 242, 285, and 312 each coordinate Mg(2+). Residues Lys337, Arg366, Ser367, and Lys388 each contribute to the (2R)-2-phosphoglycerate site. Residue Lys337 is the Proton acceptor of the active site.

The protein belongs to the enolase family. The cofactor is Mg(2+).

The protein resides in the cytoplasm. It is found in the secreted. It localises to the cell surface. The enzyme catalyses (2R)-2-phosphoglycerate = phosphoenolpyruvate + H2O. It participates in carbohydrate degradation; glycolysis; pyruvate from D-glyceraldehyde 3-phosphate: step 4/5. Functionally, catalyzes the reversible conversion of 2-phosphoglycerate (2-PG) into phosphoenolpyruvate (PEP). It is essential for the degradation of carbohydrates via glycolysis. The sequence is that of Enolase from Roseobacter denitrificans (strain ATCC 33942 / OCh 114) (Erythrobacter sp. (strain OCh 114)).